The chain runs to 104 residues: Large ribosomal subunit protein bL21 (104 aa).

It belongs to the bacterial ribosomal protein bL21 family. In terms of assembly, part of the 50S ribosomal subunit. Contacts protein L20.

In terms of biological role, this protein binds to 23S rRNA in the presence of protein L20. The chain is Large ribosomal subunit protein bL21 from Kosmotoga olearia (strain ATCC BAA-1733 / DSM 21960 / TBF 19.5.1).